The sequence spans 487 residues: Glutamyl-tRNA(Gln) amidotransferase subunit A (487 aa).

Residues Lys79 and Ser154 each act as charge relay system in the active site. The Acyl-ester intermediate role is filled by Ser178.

The protein belongs to the amidase family. GatA subfamily. As to quaternary structure, heterotrimer of A, B and C subunits.

It carries out the reaction L-glutamyl-tRNA(Gln) + L-glutamine + ATP + H2O = L-glutaminyl-tRNA(Gln) + L-glutamate + ADP + phosphate + H(+). In terms of biological role, allows the formation of correctly charged Gln-tRNA(Gln) through the transamidation of misacylated Glu-tRNA(Gln) in organisms which lack glutaminyl-tRNA synthetase. The reaction takes place in the presence of glutamine and ATP through an activated gamma-phospho-Glu-tRNA(Gln). This chain is Glutamyl-tRNA(Gln) amidotransferase subunit A, found in Heliobacterium modesticaldum (strain ATCC 51547 / Ice1).